The primary structure comprises 351 residues: sn-1 oleoyl-lipid 12-desaturase (351 aa).

2 consecutive transmembrane segments (helical) span residues 46 to 66 (WASV…IIYL) and 68 to 88 (WYCL…AFVV). The short motif at 90–94 (HDCGH) is the Histidine box-1 element. A helical transmembrane segment spans residues 102–122 (WVNDLVGHIAFAPLIYPFHSW). Positions 126–130 (HDHHH) match the Histidine box-2 motif. 2 helical membrane passes run 199-219 (IAVV…TTGV) and 222-242 (FVKF…TFTI). The short motif at 290 to 294 (HHLSV) is the Histidine box-3 element.

The protein belongs to the fatty acid desaturase type 2 family. It depends on Fe(2+) as a cofactor.

It is found in the membrane. The enzyme catalyses a 1-[(9Z)-octadecenoyl]-2-acyl-glycerolipid + 2 reduced [2Fe-2S]-[ferredoxin] + O2 + 2 H(+) = a 1-[(9Z,12Z)-octadecdienoyl]-2-acyl-glycerolipid + 2 oxidized [2Fe-2S]-[ferredoxin] + 2 H2O. Its pathway is lipid metabolism; polyunsaturated fatty acid biosynthesis. Functionally, desaturase involved in fatty acid biosynthesis. Introduces a double bond at carbon 12 of oleoyl groups (18:1) attached to the sn-1 position of the glycerol moiety of membrane glycerolipids. This enzyme is involved in chilling tolerance because the phase transition temperature of lipids of cellular membranes depends on the degree of unsaturation of fatty acids of the membrane lipids. This is sn-1 oleoyl-lipid 12-desaturase from Synechocystis sp. (strain ATCC 27184 / PCC 6803 / Kazusa).